We begin with the raw amino-acid sequence, 24 residues long: M-poneritoxin-Ng2b (24 aa).

At Leu-24 the chain carries Leucine amide.

Expressed by the venom gland.

It localises to the secreted. Functionally, has a broad spectrum of activity against both Gram-positive and Gram-negative bacteria. Is inactive against yeast, erythrocytes, and insects. In Neoponera goeldii (Ponerine ant), this protein is M-poneritoxin-Ng2b.